We begin with the raw amino-acid sequence, 530 residues long: Phosphoenolpyruvate carboxykinase (ATP) (530 aa).

Positions 60, 195, and 201 each coordinate substrate. ATP contacts are provided by residues Lys-201, His-221, and 237-245 (GLSGTGKTT). Residues Lys-201 and His-221 each contribute to the Mn(2+) site. Asp-258 provides a ligand contact to Mn(2+). Residues Glu-286, Arg-324, 443 to 444 (RI), and Ser-449 each bind ATP. Residue Arg-324 coordinates substrate.

The protein belongs to the phosphoenolpyruvate carboxykinase (ATP) family. Mn(2+) serves as cofactor.

The protein resides in the cytoplasm. The catalysed reaction is oxaloacetate + ATP = phosphoenolpyruvate + ADP + CO2. It participates in carbohydrate biosynthesis; gluconeogenesis. Functionally, involved in the gluconeogenesis. Catalyzes the conversion of oxaloacetate (OAA) to phosphoenolpyruvate (PEP) through direct phosphoryl transfer between the nucleoside triphosphate and OAA. The polypeptide is Phosphoenolpyruvate carboxykinase (ATP) (Pelobacter propionicus (strain DSM 2379 / NBRC 103807 / OttBd1)).